A 306-amino-acid polypeptide reads, in one-letter code: Peroxisome biogenesis factor 10 (306 aa).

The Peroxisomal matrix portion of the chain corresponds to methionine 1 to tyrosine 52. The helical transmembrane segment at valine 53 to aspartate 84 threads the bilayer. Residues arginine 85–histidine 147 are Cytoplasmic-facing. A helical transmembrane segment spans residues leucine 148–lysine 174. Residues glycine 175–lysine 202 are Peroxisomal matrix-facing. The helical transmembrane segment at valine 203–leucine 219 threads the bilayer. Over glutamine 220 to arginine 306 the chain is Cytoplasmic. Zn(2+) is bound by residues cysteine 256, cysteine 259, cysteine 271, histidine 273, cysteine 276, cysteine 279, cysteine 290, and cysteine 293. An RING-type zinc finger spans residues cysteine 256–arginine 294.

Belongs to the pex2/pex10/pex12 family. As to quaternary structure, component of the PEX2-PEX10-PEX12 retrotranslocation channel, composed of PEX2, PEX10 and PEX12.

It is found in the peroxisome membrane. The catalysed reaction is S-ubiquitinyl-[E2 ubiquitin-conjugating enzyme]-L-cysteine + [acceptor protein]-L-lysine = [E2 ubiquitin-conjugating enzyme]-L-cysteine + N(6)-ubiquitinyl-[acceptor protein]-L-lysine.. The protein operates within protein modification; protein ubiquitination. With respect to regulation, the E3 ubiquitin-protein ligase activity is stimulated by PEX12. In terms of biological role, E3 ubiquitin-protein ligase component of a retrotranslocation channel required for peroxisome organization by mediating export of the PEX5 receptor from peroxisomes to the cytosol, thereby promoting PEX5 recycling. The retrotranslocation channel is composed of PEX2, PEX10 and PEX12; each subunit contributing transmembrane segments that coassemble into an open channel that specifically allows the passage of PEX5 through the peroxisomal membrane. PEX10 also regulates PEX5 recycling by acting as a E3 ubiquitin-protein ligase. When PEX5 recycling is compromised, PEX10 catalyzes polyubiquitination of PEX5 during its passage through the retrotranslocation channel, leading to its degradation. The protein is Peroxisome biogenesis factor 10 (pas4) of Schizosaccharomyces pombe (strain 972 / ATCC 24843) (Fission yeast).